Consider the following 197-residue polypeptide: Inner membrane protein p54 (197 aa).

A helical transmembrane segment spans residues Tyr-32 to Phe-52. The tract at residues Pro-84–Val-123 is disordered. Repeat copies occupy residues Ala-139 to Ser-142, Ala-143 to Ser-146, Ala-147 to Ser-150, and Ala-151 to Ser-154. Residues Ala-139–Ser-154 are 4 X 4 AA tandem repeats of A-A-A-S. The interval Tyr-163 to Thr-175 is interaction with host DYNLL1.

It belongs to the asfivirus envelope protein p54 family. As to quaternary structure, interacts with the host light chain cytoplasmic dynein DYNLL1; this interaction is critical for intracellular microtubule-dependent virus transport toward viral factories.

It is found in the virion membrane. Its subcellular location is the host cytoplasm. The protein resides in the host cytoskeleton. The protein localises to the host endoplasmic reticulum membrane. Inner envelope protein involved, through its interaction with host dynein, in the intracellular microtubule-dependent transport of viral capsid toward viral factories. Seems to induce caspase-3 activation and apoptosis. Plays a role in virion morphogenesis by recruiting and transforming the host ER membranes into the precursors of the viral envelope. Involved in virus attachment to the host cell. The polypeptide is Inner membrane protein p54 (African swine fever virus (isolate Tick/South Africa/Pretoriuskop Pr4/1996) (ASFV)).